Reading from the N-terminus, the 358-residue chain is Type II methyltransferase M.HpaII (358 aa).

The 325-residue stretch at 32–356 (FTFIDLFAGI…KKILEKLGNL (325 aa)) folds into the SAM-dependent MTase C5-type domain. The active site involves Cys103.

It belongs to the class I-like SAM-binding methyltransferase superfamily. C5-methyltransferase family. In terms of assembly, monomer.

The enzyme catalyses a 2'-deoxycytidine in DNA + S-adenosyl-L-methionine = a 5-methyl-2'-deoxycytidine in DNA + S-adenosyl-L-homocysteine + H(+). A methylase that recognizes the double-stranded sequence 5'-CCGG-3', methylates C-2 on both strands, and protects the DNA from cleavage by the HpaII endonuclease. This Haemophilus parainfluenzae protein is Type II methyltransferase M.HpaII.